Consider the following 201-residue polypeptide: MAEKFIKHTGLVVPLDAANVDTDAIIPKQFLQKVTRTGFGAHLFNDWRFLDEKGQQPNPDFVLNFPQYQGASILLARENFGCGSSREHAPWALTDYGFKVVIAPSFADIFYGNSFNNQLLPVKLSDAEVDELFALVKANPGIHFDVDLEAQEVKAGEKTYRFTIDAFRRHCMMNGLDSIGLTLQHDDAIASYEEKQPAFMR.

The protein belongs to the LeuD family. LeuD type 1 subfamily. As to quaternary structure, heterodimer of LeuC and LeuD.

It catalyses the reaction (2R,3S)-3-isopropylmalate = (2S)-2-isopropylmalate. It participates in amino-acid biosynthesis; L-leucine biosynthesis; L-leucine from 3-methyl-2-oxobutanoate: step 2/4. Functionally, catalyzes the isomerization between 2-isopropylmalate and 3-isopropylmalate, via the formation of 2-isopropylmaleate. This is 3-isopropylmalate dehydratase small subunit from Escherichia coli O45:K1 (strain S88 / ExPEC).